The sequence spans 80 residues: Growth factor (80 aa).

The signal sequence occupies residues 1 to 19 (MATRNLVASLLCIMYAVHA). The EGF-like domain maps to 29–73 (HVKVCNHDYENYCLNNGTCFTIALDNVSITPFCVCRINYEGSRCQ). 3 disulfide bridges follow: C33–C47, C41–C61, and C63–C72. N-linked (GlcNAc...) asparagine; by host glycosylation is found at N44 and N54.

The protein localises to the secreted. This is Growth factor from Oryctolagus cuniculus (Rabbit).